A 256-amino-acid chain; its full sequence is Thiazole synthase (256 aa).

K95 (schiff-base intermediate with DXP) is an active-site residue. 1-deoxy-D-xylulose 5-phosphate-binding positions include G156, 182 to 183 (AG), and 204 to 205 (NT).

The protein belongs to the ThiG family. Homotetramer. Forms heterodimers with either ThiH or ThiS.

The protein localises to the cytoplasm. It catalyses the reaction [ThiS sulfur-carrier protein]-C-terminal-Gly-aminoethanethioate + 2-iminoacetate + 1-deoxy-D-xylulose 5-phosphate = [ThiS sulfur-carrier protein]-C-terminal Gly-Gly + 2-[(2R,5Z)-2-carboxy-4-methylthiazol-5(2H)-ylidene]ethyl phosphate + 2 H2O + H(+). It participates in cofactor biosynthesis; thiamine diphosphate biosynthesis. Functionally, catalyzes the rearrangement of 1-deoxy-D-xylulose 5-phosphate (DXP) to produce the thiazole phosphate moiety of thiamine. Sulfur is provided by the thiocarboxylate moiety of the carrier protein ThiS. In vitro, sulfur can be provided by H(2)S. This chain is Thiazole synthase, found in Escherichia coli O127:H6 (strain E2348/69 / EPEC).